The sequence spans 326 residues: Protein BugT (326 aa).

The N-terminal stretch at 1–25 (MNMTRLLAVIGIFIATAGIAAPVSA) is a signal peptide.

This sequence belongs to the UPF0065 (bug) family.

The protein resides in the periplasm. In Bordetella pertussis (strain Tohama I / ATCC BAA-589 / NCTC 13251), this protein is Protein BugT (bugT).